We begin with the raw amino-acid sequence, 579 residues long: MSHPPLPPQSERRALAIAQAVYEAFEDYHARFSEITARAKQRFETRDWSGAREDAVARIALYDQYIAECMLRLRAVLLGQAHDRALWMRARDHYAALLSGLIDQELYKTFYNTLTRRYFGTHGVDADIEFIALDIEPTDAITVPVARHTYAVSPGRLTDMLVRVLGDYAFAVPYTHRTRCAAAIAVRLLDDLAHWGEHPVRSVELLETVFYRERRAYLVGRVFGEHRFSPCVIALINDEAGLRAEAVLTRRSDVAQLFSNSRSYFQADLSTVGDAVVFLRSLLTHKPVDELYTMLGRAKQGKTERYRTFFSHFQAHPSEQLVHADGTPGMVMVVFTLPSYPLVFKLIRDRFAYPKTMSRAQVEGKYELVFQLDRIGRLLDAQPYRFLRFPKARFSPALLQELQTSCAMSLSEDGDDVLIALCYVQRRLRPLNLYLREQLPEAAHAAALDYGQAIKDMARNNIFPGDMLLKNFGITRHQRAVFYDYDELCLITECNFRDWPVPTTYEEQMAAEPWFHVGPRDVFPERFALFMGLPASQLEAVKHQHPELFDPRWWRDLQSRLREDDYPDTPPYAESRRLA.

Residues A324–M330 and K345 contribute to the ATP site. The active site involves D380.

It belongs to the AceK family.

It is found in the cytoplasm. It catalyses the reaction L-seryl-[isocitrate dehydrogenase] + ATP = O-phospho-L-seryl-[isocitrate dehydrogenase] + ADP + H(+). Its function is as follows. Bifunctional enzyme which can phosphorylate or dephosphorylate isocitrate dehydrogenase (IDH) on a specific serine residue. This is a regulatory mechanism which enables bacteria to bypass the Krebs cycle via the glyoxylate shunt in response to the source of carbon. When bacteria are grown on glucose, IDH is fully active and unphosphorylated, but when grown on acetate or ethanol, the activity of IDH declines drastically concomitant with its phosphorylation. The polypeptide is Isocitrate dehydrogenase kinase/phosphatase (Xanthomonas euvesicatoria pv. vesicatoria (strain 85-10) (Xanthomonas campestris pv. vesicatoria)).